The sequence spans 280 residues: DegV domain-containing protein M6_Spy1440 (280 aa).

Residues 3-280 enclose the DegV domain; the sequence is WKIVTDSGCD…DGGLLMGYEI (278 aa). Residues serine 63 and serine 91 each contribute to the hexadecanoate site.

May bind long-chain fatty acids, such as palmitate, and may play a role in lipid transport or fatty acid metabolism. This is DegV domain-containing protein M6_Spy1440 from Streptococcus pyogenes serotype M6 (strain ATCC BAA-946 / MGAS10394).